The primary structure comprises 374 residues: Probable dual-specificity RNA methyltransferase RlmN (374 aa).

Catalysis depends on Glu108, which acts as the Proton acceptor. Positions 114–361 (YSDRNTVCIS…SCTVRDTRGR (248 aa)) constitute a Radical SAM core domain. A disulfide bridge connects residues Cys121 and Cys367. 3 residues coordinate [4Fe-4S] cluster: Cys128, Cys132, and Cys135. S-adenosyl-L-methionine is bound by residues 188–189 (GE), Ser222, 245–247 (SLH), and Asn324. Cys367 functions as the S-methylcysteine intermediate in the catalytic mechanism.

Belongs to the radical SAM superfamily. RlmN family. [4Fe-4S] cluster is required as a cofactor.

Its subcellular location is the cytoplasm. The enzyme catalyses adenosine(2503) in 23S rRNA + 2 reduced [2Fe-2S]-[ferredoxin] + 2 S-adenosyl-L-methionine = 2-methyladenosine(2503) in 23S rRNA + 5'-deoxyadenosine + L-methionine + 2 oxidized [2Fe-2S]-[ferredoxin] + S-adenosyl-L-homocysteine. The catalysed reaction is adenosine(37) in tRNA + 2 reduced [2Fe-2S]-[ferredoxin] + 2 S-adenosyl-L-methionine = 2-methyladenosine(37) in tRNA + 5'-deoxyadenosine + L-methionine + 2 oxidized [2Fe-2S]-[ferredoxin] + S-adenosyl-L-homocysteine. Functionally, specifically methylates position 2 of adenine 2503 in 23S rRNA and position 2 of adenine 37 in tRNAs. The chain is Probable dual-specificity RNA methyltransferase RlmN from Mycobacterium sp. (strain JLS).